The following is a 418-amino-acid chain: Pyruvate decarboxylase 1 (418 aa).

Substrate is bound at residue His-59. Positions 337-418 are thiamine pyrophosphate binding; that stretch reads DSWFNCQKLK…IFLINNGGYT (82 aa). Mg(2+) is bound by residues Asp-387, Asn-414, and Gly-416.

This sequence belongs to the TPP enzyme family. In terms of assembly, homotetramer. Requires a metal cation as cofactor. It depends on thiamine diphosphate as a cofactor. Leaves.

It carries out the reaction a 2-oxocarboxylate + H(+) = an aldehyde + CO2. The polypeptide is Pyruvate decarboxylase 1 (PDC1) (Nicotiana tabacum (Common tobacco)).